Consider the following 113-residue polypeptide: Putative pterin-4-alpha-carbinolamine dehydratase (113 aa).

Belongs to the pterin-4-alpha-carbinolamine dehydratase family.

It carries out the reaction (4aS,6R)-4a-hydroxy-L-erythro-5,6,7,8-tetrahydrobiopterin = (6R)-L-erythro-6,7-dihydrobiopterin + H2O. The chain is Putative pterin-4-alpha-carbinolamine dehydratase from Idiomarina loihiensis (strain ATCC BAA-735 / DSM 15497 / L2-TR).